Reading from the N-terminus, the 238-residue chain is uncharacterized protein (238 aa).

This is an uncharacterized protein from Rickettsia prowazekii (strain Madrid E).